An 87-amino-acid chain; its full sequence is Cobalt transport protein CbiN (87 aa).

A run of 2 helical transmembrane segments spans residues 4–24 and 58–78; these read LLLL…EWAG and MLFS…LGYY.

It belongs to the CbiN family. In terms of assembly, forms an energy-coupling factor (ECF) transporter complex composed of an ATP-binding protein (A component, CbiO), a transmembrane protein (T component, CbiQ) and 2 possible substrate-capture proteins (S components, CbiM and CbiN) of unknown stoichimetry.

It localises to the cell membrane. The protein operates within cofactor biosynthesis; adenosylcobalamin biosynthesis. Part of the energy-coupling factor (ECF) transporter complex CbiMNOQ involved in cobalt import. The polypeptide is Cobalt transport protein CbiN (Archaeoglobus fulgidus (strain ATCC 49558 / DSM 4304 / JCM 9628 / NBRC 100126 / VC-16)).